The following is an 81-amino-acid chain: Gamma-conotoxin-like TeA53 (81 aa).

The N-terminal stretch at 1–19 is a signal peptide; the sequence is MQKLTILLLVAAVLMSTQA. The propeptide occupies 20 to 42; sequence LNQEQHQRAKINLLSKRKPPAER. 3 disulfide bridges follow: C49/C63, C56/C67, and C62/C72.

It belongs to the conotoxin O2 superfamily. In terms of tissue distribution, expressed by the venom duct.

The protein resides in the secreted. In terms of biological role, gamma-conotoxins may act on voltage-gated non-specific cation pacemaker channels (HCN). The chain is Gamma-conotoxin-like TeA53 from Conus textile (Cloth-of-gold cone).